The primary structure comprises 109 residues: Transcription initiation factor IIA subunit 2 (109 aa).

Belongs to the TFIIA subunit 2 family. In terms of assembly, TFIIA is a heterodimer of the large unprocessed subunit 1 and a small subunit gamma. It was originally believed to be a heterotrimer of an alpha (p35), a beta (p19) and a gamma subunit (p12). Interacts with NCOA6 general coactivator. TFIIA forms a complex with TBP. Interacts with HSF1 (via transactivation domain). Part of TBP-based Pol II pre-initiation complex (PIC), in which Pol II core assembles with general transcription factors and other specific initiation factors including GTF2E1, GTF2E2, GTF2F1, GTF2F2, TCEA1, ERCC2, ERCC3, GTF2H2, GTF2H3, GTF2H4, GTF2H5, GTF2A1, GTF2A2, GTF2B and TBP; this large multi-subunit PIC complex mediates DNA unwinding and targets Pol II core to the transcription start site where the first phosphodiester bond forms. (Microbial infection) Interacts with SV40 Large T antigen.

Its subcellular location is the nucleus. TFIIA is a component of the transcription machinery of RNA polymerase II and plays an important role in transcriptional activation. TFIIA in a complex with TBP mediates transcriptional activity. The polypeptide is Transcription initiation factor IIA subunit 2 (GTF2A2) (Homo sapiens (Human)).